An 82-amino-acid polypeptide reads, in one-letter code: Beta-insect toxin AaBTxL1 (82 aa).

Residues 1–22 (MMKLVLFSVIVILFSLIGSIHG) form the signal peptide. Residues 25 to 82 (VPGNYPLDRSGKKYPCTITWKKNPSCIQICKKHGVKYGYCFDFQCWCEIFGRLKTFKI) enclose the LCN-type CS-alpha/beta domain. Intrachain disulfides connect C40-C64, C50-C69, and C54-C71.

The protein belongs to the long (3 C-C) scorpion toxin superfamily. Sodium channel inhibitor family. Beta subfamily. Expressed by the venom gland.

Its subcellular location is the secreted. In terms of biological role, shifts the voltage of activation of para/tipE voltage-dependent sodium channels (Nav) toward more negative potentials. In Androctonus australis (Sahara scorpion), this protein is Beta-insect toxin AaBTxL1.